The primary structure comprises 153 residues: Nucleoside diphosphate kinase (153 aa).

6 residues coordinate ATP: lysine 11, phenylalanine 59, arginine 87, threonine 93, arginine 104, and asparagine 114. Histidine 117 functions as the Pros-phosphohistidine intermediate in the catalytic mechanism.

Belongs to the NDK family. Mg(2+) is required as a cofactor.

It carries out the reaction a 2'-deoxyribonucleoside 5'-diphosphate + ATP = a 2'-deoxyribonucleoside 5'-triphosphate + ADP. The enzyme catalyses a ribonucleoside 5'-diphosphate + ATP = a ribonucleoside 5'-triphosphate + ADP. Major role in the synthesis of nucleoside triphosphates other than ATP. The ATP gamma phosphate is transferred to the NDP beta phosphate via a ping-pong mechanism, using a phosphorylated active-site intermediate. The chain is Nucleoside diphosphate kinase (swoH) from Emericella nidulans (strain FGSC A4 / ATCC 38163 / CBS 112.46 / NRRL 194 / M139) (Aspergillus nidulans).